The following is a 214-amino-acid chain: uncharacterized protein (214 aa).

Residues 131–214 (TEDILSPPSP…SSSSDSLDAY (84 aa)) form a disordered region. Basic residues predominate over residues 174–189 (HRRRRTRRQLRYRQRV). The segment covering 197–214 (DLGEPLESSSSSDSLDAY) has biased composition (low complexity).

This is an uncharacterized protein from Tupaia.